The sequence spans 96 residues: Co-chaperonin GroES (96 aa).

It belongs to the GroES chaperonin family. Heptamer of 7 subunits arranged in a ring. Interacts with the chaperonin GroEL.

It localises to the cytoplasm. Functionally, together with the chaperonin GroEL, plays an essential role in assisting protein folding. The GroEL-GroES system forms a nano-cage that allows encapsulation of the non-native substrate proteins and provides a physical environment optimized to promote and accelerate protein folding. GroES binds to the apical surface of the GroEL ring, thereby capping the opening of the GroEL channel. This chain is Co-chaperonin GroES, found in Histophilus somni (strain 129Pt) (Haemophilus somnus).